The primary structure comprises 871 residues: Translation initiation factor IF-2 (871 aa).

2 disordered regions span residues 60 to 101 (KKNI…QEVK) and 184 to 203 (ESLK…KKES). Residues 61–72 (KNIKTPTAKKPK) show a composition bias toward basic residues. A compositionally biased stretch (basic and acidic residues) spans 73 to 101 (KENIKEQEKLNESEKKEPKKEEKLKQEVK). In terms of domain architecture, tr-type G spans 370–537 (TRAPVITIMG…IVLLQADILE (168 aa)). Residues 379–386 (GHVDHGKT) are G1. 379-386 (GHVDHGKT) contacts GTP. A G2 region spans residues 404 to 408 (GITQH). The segment at 425–428 (DTPG) is G3. GTP-binding positions include 425–429 (DTPGH) and 479–482 (NKMD). The tract at residues 479 to 482 (NKMD) is G4. A G5 region spans residues 515–517 (SAK).

Belongs to the TRAFAC class translation factor GTPase superfamily. Classic translation factor GTPase family. IF-2 subfamily.

The protein localises to the cytoplasm. Its function is as follows. One of the essential components for the initiation of protein synthesis. Protects formylmethionyl-tRNA from spontaneous hydrolysis and promotes its binding to the 30S ribosomal subunits. Also involved in the hydrolysis of GTP during the formation of the 70S ribosomal complex. In Campylobacter jejuni (strain RM1221), this protein is Translation initiation factor IF-2.